Reading from the N-terminus, the 468-residue chain is 3-isopropylmalate dehydratase large subunit (468 aa).

The [4Fe-4S] cluster site is built by C347, C407, and C410.

It belongs to the aconitase/IPM isomerase family. LeuC type 1 subfamily. In terms of assembly, heterodimer of LeuC and LeuD. It depends on [4Fe-4S] cluster as a cofactor.

The catalysed reaction is (2R,3S)-3-isopropylmalate = (2S)-2-isopropylmalate. It participates in amino-acid biosynthesis; L-leucine biosynthesis; L-leucine from 3-methyl-2-oxobutanoate: step 2/4. Functionally, catalyzes the isomerization between 2-isopropylmalate and 3-isopropylmalate, via the formation of 2-isopropylmaleate. The sequence is that of 3-isopropylmalate dehydratase large subunit from Glaesserella parasuis serovar 5 (strain SH0165) (Haemophilus parasuis).